The following is a 95-amino-acid chain: Small ubiquitin-related modifier 4 (95 aa).

In terms of domain architecture, Ubiquitin-like spans 17–95; sequence HINLKVAGQD…VLQQQTGGVY (79 aa). Gly93 participates in a covalent cross-link: Glycyl lysine isopeptide (Gly-Lys) (interchain with K-? in acceptor proteins). Residues 94-95 constitute a propeptide that is removed on maturation; sequence VY.

It belongs to the ubiquitin family. SUMO subfamily. In terms of assembly, interacts with SAE2. Covalently attached to a number of proteins.

In terms of biological role, ubiquitin-like protein which can be covalently attached to target lysines as a monomer. Does not seem to be involved in protein degradation and may modulate protein subcellular localization, stability or activity. Upon oxidative stress, conjugates to various anti-oxidant enzymes, chaperones, and stress defense proteins. May also conjugate to NFKBIA, TFAP2A and FOS, negatively regulating their transcriptional activity, and to NR3C1, positively regulating its transcriptional activity. Covalent attachment to its substrates requires prior activation by the E1 complex SAE1-SAE2 and linkage to the E2 enzyme UBE2I. The sequence is that of Small ubiquitin-related modifier 4 (SUMO4) from Sus scrofa (Pig).